An 88-amino-acid chain; its full sequence is HssA/B-like protein 6 (88 aa).

Positions 1–22 (MSILSALTSISNPMKSSNSNVA) are disordered.

This sequence belongs to the hssA/B family.

This Dictyostelium discoideum (Social amoeba) protein is HssA/B-like protein 6 (hssl6).